A 666-amino-acid polypeptide reads, in one-letter code: Calpain-10 (666 aa).

The 309-residue stretch at 13–321 (LFRDAAFPAS…FDEVTIGYPV (309 aa)) folds into the Calpain catalytic domain. Active-site residues include Cys73, His238, and Asn263. 2 domain III regions span residues 322–488 (TEAG…ISLS) and 507–648 (EWET…IHSQ).

The protein belongs to the peptidase C2 family.

In terms of biological role, calcium-regulated non-lysosomal thiol-protease which catalyzes limited proteolysis of substrates involved in cytoskeletal remodeling and signal transduction. May play a role in insulin-stimulated glucose uptake. This is Calpain-10 (Capn10) from Mus musculus (Mouse).